Here is a 627-residue protein sequence, read N- to C-terminus: Neuronal acetylcholine receptor subunit alpha-4 (627 aa).

The signal sequence occupies residues 1 to 28 (MELGGPGAPRLLPPLLLLLGTGLLRASS). Residues 29 to 242 (HVETRAHAEE…ITYAFVIRRL (214 aa)) lie on the Extracellular side of the membrane. A glycan (N-linked (GlcNAc...) asparagine) is linked at N57. The Ca(2+) site is built by V76 and E78. 2 N-linked (GlcNAc...) asparagine glycosylation sites follow: N107 and N174. Disulfide bonds link C161–C175 and C225–C226. The chain crosses the membrane as a helical span at residues 243–267 (PLFYTINLIIPCLLISCLTVLVFYL). C271 carries the S-palmitoyl cysteine lipid modification. 2 helical membrane-spanning segments follow: residues 275–293 (ITLC…LLIT) and 309–330 (YLLF…VLNV). At 331–600 (HHRSPRTHTM…WKYVAMVIDR (270 aa)) the chain is on the cytoplasmic side. Disordered stretches follow at residues 382-479 (PRFW…EAVE) and 497-559 (DATS…RHLP). Phosphoserine occurs at positions 424, 538, and 541. A helical transmembrane segment spans residues 601-619 (IFLWMFIIVCLLGTVGLFL).

It belongs to the ligand-gated ion channel (TC 1.A.9) family. Acetylcholine receptor (TC 1.A.9.1) subfamily. Alpha-4/CHRNA4 sub-subfamily. In terms of assembly, neuronal AChR is composed of two different types of subunits: alpha and beta. CHRNA4 forms heteropentameric neuronal acetylcholine receptors with CHRNB2 and CHRNB4, as well as CHRNA5 and CHRNB3 as accesory subunits. Found in two major stoichiometric forms, LS (low agonist sensitivity): (CHRNA4)3:(CHRNB2)2 and HS (high agonist sensitivity): (CHRNA4)2:(CHRNB2)3, the two stoichiometric forms differ in their unitary conductance, calcium permeability, ACh sensitivity and potentiation by divalent cation. Cells produce predominantly an (CHRNA4)3:(CHRNB2)2 nAChR. The (CHRNA4)2:(CHRNB2)3 expression is selectively up-regulated by nicotine and has lower single channel conductance and calcium permeability. In the striatum, also forms CHRNA4:CHRNA6:CHRNB2 complexes. Also found in the stoichiometric form: (CHRNA4:CHRNB2)2:CHRNB3. Interacts with RIC3; which is required for proper folding and assembly. Interacts with LYPD6.

The protein localises to the synaptic cell membrane. It is found in the cell membrane. It catalyses the reaction Ca(2+)(in) = Ca(2+)(out). It carries out the reaction K(+)(in) = K(+)(out). The enzyme catalyses Na(+)(in) = Na(+)(out). Its activity is regulated as follows. Activated by a myriad of ligands such as acetylcholine, cytisine, nicotine, choline and epibatidine. Channel potentiation by calcium is stoichiometry-selective, CHRNA4:CHRNB2 nACh receptor is achieved by calcium association with topographically distinct sites framed by anionic residues within the CHRNA4 subunit and between the CHRNA4 and CHRNB2 subunits. nAChR activity is inhibited by the antagonist alpha-conotoxins BuIA, PnIA, GID and MII, small disulfide-constrained peptides from cone snails. Its function is as follows. Component of neuronal acetylcholine receptors (nAChRs) that function as pentameric, ligand-gated cation channels with high calcium permeability among other activities. nAChRs are excitatory neurotrasnmitter receptors formed by a collection of nAChR subunits known to mediate synaptic transmission in the nervous system and the neuromuscular junction. Each nAchR subunit confers differential attributes to channel properties, including activation, deactivation and desensitization kinetics, pH sensitivity, cation permeability, and binding to allosteric modulators. CHRNA4 forms heteropentameric neuronal acetylcholine receptors with CHRNB2 and CHRNB4, as well as CHRNA5 and CHRNB3 as accesory subunits. Is the most abundant nAChR subtype expressed in the central nervous system. Found in two major stoichiometric forms,(CHRNA4)3:(CHRNB2)2 and (CHRNA4)2:(CHRNB2)3, the two stoichiometric forms differ in their unitary conductance, calcium permeability, ACh sensitivity and potentiation by divalent cation. Involved in the modulation of calcium-dependent signaling pathways, influences the release of neurotransmitters, including dopamine, glutamate and GABA. The protein is Neuronal acetylcholine receptor subunit alpha-4 (CHRNA4) of Pan troglodytes (Chimpanzee).